The following is a 1367-amino-acid chain: Phospholipid-transporting ATPase C4F10.16c (1367 aa).

Over 1-154 (MPSLINFDAI…PKNLWNQFKN (154 aa)) the chain is Cytoplasmic. The segment at 34-104 (HNGSLAHEGP…KKNEAGTESG (71 aa)) is disordered. A compositionally biased stretch (basic and acidic residues) spans 50–70 (SSRHHESQFSQEAHAEQRSRD). Residues 77 to 92 (FEGSCNNSDQSWTSRV) show a composition bias toward polar residues. A helical membrane pass occupies residues 155–172 (IANAFFLFVTLLQCIPLF). At 173–177 (CPEHL) the chain is on the lumenal side. The chain crosses the membrane as a helical span at residues 178-197 (GLSFIPLSVILLTTAIKDGI). Topologically, residues 198-482 (EDYRRCVLDK…PSKRSRITRD (285 aa)) are cytoplasmic. A helical transmembrane segment spans residues 483–503 (LNWTIILNFLLLFAMCLFSGV). Topologically, residues 504–531 (LRSIYSAQNNSARVFELSKNSNTAPAHG) are lumenal. A helical transmembrane segment spans residues 532-552 (IISIFTSLILFQNLVPISLYI). Over 553–1091 (TMDIVRSIQS…GRWDYKRMSQ (539 aa)) the chain is Cytoplasmic. Aspartate 600 (4-aspartylphosphate intermediate) is an active-site residue. The ATP site is built by aspartate 600, lysine 601, threonine 602, glutamate 724, phenylalanine 765, serine 767, lysine 770, lysine 788, arginine 822, threonine 823, threonine 902, glycine 903, aspartate 904, arginine 1009, and lysine 1015. Aspartate 600 provides a ligand contact to Mg(2+). Residue threonine 602 participates in Mg(2+) binding. Position 1035 (aspartate 1035) interacts with Mg(2+). ATP contacts are provided by asparagine 1038 and aspartate 1039. Position 1039 (aspartate 1039) interacts with Mg(2+). The chain crosses the membrane as a helical span at residues 1092–1112 (MISFFFYKNVIWTFILFWYQF). The Lumenal segment spans residues 1113–1124 (YNEFDGNYIFDY). The helical transmembrane segment at 1125 to 1145 (TYVMLFNLLFTSLPVIIAGCF) threads the bilayer. Over 1146 to 1174 (DQDVDASVSMKNPSLYQRGILGLEWNGKR) the chain is Cytoplasmic. The helical transmembrane segment at 1175 to 1197 (FWSYMLDGIYQSLVCFGVALFVF) threads the bilayer. Residues 1198–1212 (KFGDFVSWTGRNIEC) lie on the Lumenal side of the membrane. The chain crosses the membrane as a helical span at residues 1213-1233 (IEDIGLFISSPTIFVINIFIL). The Cytoplasmic portion of the chain corresponds to 1234–1240 (MNQERLN). Residues 1241-1261 (LISLITWMFSIGVFWIWTFIY) traverse the membrane as a helical segment. Over 1262-1276 (SEVGPSYAFHKSASR) the chain is Lumenal. A helical transmembrane segment spans residues 1277-1297 (TCQTFGFWCVTVLTIALCLLP). Residue arginine 1298 participates in a 1,2-diacyl-sn-glycero-3-phospho-L-serine binding. Residues 1298–1367 (RFSYICLQKL…TSVSFDDSNK (70 aa)) lie on the Cytoplasmic side of the membrane.

Belongs to the cation transport ATPase (P-type) (TC 3.A.3) family. Type IV subfamily. It depends on Mg(2+) as a cofactor.

The protein resides in the cell membrane. The protein localises to the endoplasmic reticulum membrane. The enzyme catalyses ATP + H2O + phospholipidSide 1 = ADP + phosphate + phospholipidSide 2.. The catalysed reaction is a 1,2-diacyl-sn-glycero-3-phosphoethanolamine(out) + ATP + H2O = a 1,2-diacyl-sn-glycero-3-phosphoethanolamine(in) + ADP + phosphate + H(+). It catalyses the reaction a 1,2-diacyl-sn-glycero-3-phosphocholine(out) + ATP + H2O = a 1,2-diacyl-sn-glycero-3-phosphocholine(in) + ADP + phosphate + H(+). It carries out the reaction a beta-D-glucosyl-(1&lt;-&gt;1')-N-acylsphing-4-enine(out) + ATP + H2O = a beta-D-glucosyl-(1&lt;-&gt;1')-N-acylsphing-4-enine(in) + ADP + phosphate + H(+). The enzyme catalyses a 1,2-diacyl-sn-glycero-3-phospho-L-serine(out) + ATP + H2O = a 1,2-diacyl-sn-glycero-3-phospho-L-serine(in) + ADP + phosphate + H(+). Functionally, catalytic component of a P4-ATPase flippase complex which catalyzes the hydrolysis of ATP coupled to the transport of glucosylceramide, phosphatidylcholine, phosphatidylethanolamine, and small amounts of phosphatidylserine from the lumenal to the cytosolic leaflet of the cell membrane and ensures the maintenance of asymmetric distribution of phospholipids. The protein is Phospholipid-transporting ATPase C4F10.16c of Schizosaccharomyces pombe (strain 972 / ATCC 24843) (Fission yeast).